We begin with the raw amino-acid sequence, 132 residues long: L-ectoine synthase (132 aa).

This sequence belongs to the ectoine synthase family.

It carries out the reaction (2S)-4-acetamido-2-aminobutanoate = L-ectoine + H2O. The protein operates within amine and polyamine biosynthesis; ectoine biosynthesis; L-ectoine from L-aspartate 4-semialdehyde: step 3/3. In terms of biological role, catalyzes the circularization of gamma-N-acetyl-alpha,gamma-diaminobutyric acid (ADABA) to ectoine (1,4,5,6-tetrahydro-2-methyl-4-pyrimidine carboxylic acid), which is an excellent osmoprotectant. In Teredinibacter turnerae (strain ATCC 39867 / T7901), this protein is L-ectoine synthase.